The sequence spans 155 residues: Ribonuclease H (155 aa).

The RNase H type-1 domain maps to 1-142 (MLKQVEIFTD…CDELARAAAM (142 aa)). 4 residues coordinate Mg(2+): aspartate 10, glutamate 48, aspartate 70, and aspartate 134.

It belongs to the RNase H family. As to quaternary structure, monomer. Mg(2+) serves as cofactor.

The protein resides in the cytoplasm. The catalysed reaction is Endonucleolytic cleavage to 5'-phosphomonoester.. Functionally, endonuclease that specifically degrades the RNA of RNA-DNA hybrids. The chain is Ribonuclease H from Citrobacter koseri (strain ATCC BAA-895 / CDC 4225-83 / SGSC4696).